The primary structure comprises 218 residues: Peptide deformylase (218 aa).

The Fe cation site is built by C130 and H172. The active site involves E173. H176 is a binding site for Fe cation.

The protein belongs to the polypeptide deformylase family. Requires Fe(2+) as cofactor.

It catalyses the reaction N-terminal N-formyl-L-methionyl-[peptide] + H2O = N-terminal L-methionyl-[peptide] + formate. In terms of biological role, removes the formyl group from the N-terminal Met of newly synthesized proteins. Requires at least a dipeptide for an efficient rate of reaction. N-terminal L-methionine is a prerequisite for activity but the enzyme has broad specificity at other positions. The chain is Peptide deformylase from Bifidobacterium adolescentis (strain ATCC 15703 / DSM 20083 / NCTC 11814 / E194a).